Consider the following 118-residue polypeptide: Ribonuclease P protein component (118 aa).

The protein belongs to the RnpA family. As to quaternary structure, consists of a catalytic RNA component (M1 or rnpB) and a protein subunit.

The enzyme catalyses Endonucleolytic cleavage of RNA, removing 5'-extranucleotides from tRNA precursor.. Its function is as follows. RNaseP catalyzes the removal of the 5'-leader sequence from pre-tRNA to produce the mature 5'-terminus. It can also cleave other RNA substrates such as 4.5S RNA. The protein component plays an auxiliary but essential role in vivo by binding to the 5'-leader sequence and broadening the substrate specificity of the ribozyme. The polypeptide is Ribonuclease P protein component (Shewanella sp. (strain ANA-3)).